A 153-amino-acid chain; its full sequence is Agglutinin (153 aa).

Beta-D-galactosyl-(1-&gt;3)-N-acetyl-D-galactosamine is bound by residues 22–25 and Asn46; that span reads NAWE. The 96-residue stretch at 58–153 folds into the Ricin B-type lectin domain; sequence GDSAEYLIIN…DNQKWYFDAK (96 aa).

In terms of assembly, homodimer.

Lectin that primarily recognizes glycans with a non-reducing terminal N-acetylgalactosamine (GalNAc), with a preference for the alpha- over the beta-anomer. Can also bind non-reducing terminal galactose (Gal) residues but with a lower affinity. Strongly interacts with glycolipid type glycans with terminal non-reducing Gal or GalNAc but fails to bind sialylated or fucosylated forms of the same glycans. Strongly interacts with galactosylated N-glycans, displaying highest affinity for alpha-1-3 branched mono-antennary N-glycans but also binding to multi-antennary glycans. This is Agglutinin from Sclerotinia sclerotiorum (strain ATCC 18683 / 1980 / Ss-1) (White mold).